Reading from the N-terminus, the 187-residue chain is Potassium-transporting ATPase KdpC subunit (187 aa).

The chain crosses the membrane as a helical span at residues 10-30 (LVAATMLICVAGYSAAVWAVG).

The protein belongs to the KdpC family. As to quaternary structure, the system is composed of three essential subunits: KdpA, KdpB and KdpC.

It localises to the cell inner membrane. Functionally, part of the high-affinity ATP-driven potassium transport (or Kdp) system, which catalyzes the hydrolysis of ATP coupled with the electrogenic transport of potassium into the cytoplasm. This subunit acts as a catalytic chaperone that increases the ATP-binding affinity of the ATP-hydrolyzing subunit KdpB by the formation of a transient KdpB/KdpC/ATP ternary complex. In Parvibaculum lavamentivorans (strain DS-1 / DSM 13023 / NCIMB 13966), this protein is Potassium-transporting ATPase KdpC subunit.